The sequence spans 345 residues: Ferrochelatase (345 aa).

Fe cation-binding residues include His-215 and Glu-296.

This sequence belongs to the ferrochelatase family.

Its subcellular location is the cytoplasm. The catalysed reaction is heme b + 2 H(+) = protoporphyrin IX + Fe(2+). It participates in porphyrin-containing compound metabolism; protoheme biosynthesis; protoheme from protoporphyrin-IX: step 1/1. Functionally, catalyzes the ferrous insertion into protoporphyrin IX. In Rhodopseudomonas palustris (strain TIE-1), this protein is Ferrochelatase.